A 339-amino-acid chain; its full sequence is MLTTTIIAGIISFILTILAMPFFIRFYQLKKINGQQMHEDVKQHLAKAGTPTMGGTVFLLVAALVTFICAFVLHITGGPAFGATLAILFIVLIYGTIGFLDDFLKIFKKINQGLTAWQKMALQLIGGLVFYLVHVKPSGTDSLNLFGFPLHLGVFYIIFILFWVVGFSNAVNLTDGIDGLASISVVISLLTYSVIAYVQNQFDVLLIIISMVGALLGFFVYNHKPAKVFMGDVGSLALGAMLAAISITLRQEWTLLIIGIVYVLETASVMLQVSYFKWTKKRKGEGQRIFRMTPFHHHLELGGLRLRESGKKWSEWQVDFFLWSIGLLGSLLILAILYL.

10 helical membrane passes run 4 to 24 (TTII…PFFI), 53 to 73 (MGGT…AFVL), 80 to 100 (AFGA…IGFL), 113 to 133 (GLTA…FYLV), 145 to 165 (LFGF…FWVV), 176 to 196 (GIDG…SVIA), 202 to 222 (FDVL…FVYN), 228 to 248 (VFMG…ISIT), 253 to 273 (WTLL…MLQV), and 318 to 338 (VDFF…AILY).

It belongs to the glycosyltransferase 4 family. MraY subfamily. Requires Mg(2+) as cofactor.

Its subcellular location is the cell membrane. The enzyme catalyses UDP-N-acetyl-alpha-D-muramoyl-L-alanyl-gamma-D-glutamyl-L-lysyl-D-alanyl-D-alanine + di-trans,octa-cis-undecaprenyl phosphate = Mur2Ac(oyl-L-Ala-gamma-D-Glu-L-Lys-D-Ala-D-Ala)-di-trans,octa-cis-undecaprenyl diphosphate + UMP. The protein operates within cell wall biogenesis; peptidoglycan biosynthesis. Functionally, catalyzes the initial step of the lipid cycle reactions in the biosynthesis of the cell wall peptidoglycan: transfers peptidoglycan precursor phospho-MurNAc-pentapeptide from UDP-MurNAc-pentapeptide onto the lipid carrier undecaprenyl phosphate, yielding undecaprenyl-pyrophosphoryl-MurNAc-pentapeptide, known as lipid I. The chain is Phospho-N-acetylmuramoyl-pentapeptide-transferase from Streptococcus mutans serotype c (strain ATCC 700610 / UA159).